A 185-amino-acid chain; its full sequence is Sarcoplasmic calcium-binding proteins I, III, and IV (185 aa).

4 EF-hand domains span residues 5–41, 57–92, 102–137, and 138–173; these read FQKQKIKFTFDFFLDYNKDGSIQWEDFEEMIKRYKEV, SLEDEWRDLKGRADINKDDVVSWEEYLAMWEKTIAT, WCQNRIPFLFKGMDVSGDGIVDLEEFQNYCKNFQLQ, and CADVPAVYNVITDGGKVTFDLNRYKELYYRLLTSPA. Ca(2+)-binding residues include Asp19, Asn21, Asp23, Ser25, Asp30, Asp70, Asn72, Asp74, Glu81, Asp115, Ser117, Asp119, and Glu126.

Like parvalbumins, SCPs seem to be more abundant in fast contracting muscles, but no functional relationship can be established from this distribution. The chain is Sarcoplasmic calcium-binding proteins I, III, and IV from Branchiostoma lanceolatum (Common lancelet).